A 676-amino-acid polypeptide reads, in one-letter code: Envelope glycoprotein (676 aa).

The signal sequence occupies residues 1–32 (MGVTGILQLPRDRFKRTSFFLWVIILFQRTFS). Over 33 to 650 (IPLGVIHNST…NDNWWTGWRQ (618 aa)) the chain is Extracellular. N40 carries an N-linked (GlcNAc...) asparagine; by host glycan. Cystine bridges form between C53-C609, C108-C135, C121-C147, C511-C556, and C601-C608. Positions 54–201 (RDKLSSTNQL…DFFSSHPLRE (148 aa)) are receptor-binding. 11 N-linked (GlcNAc...) asparagine; by host glycosylation sites follow: N204, N228, N238, N257, N268, N296, N317, N333, N346, N386, and N413. A mucin-like region region spans residues 305–485 (ELSFTVVSNG…SGKLGLITNT (181 aa)). Polar residues predominate over residues 315–335 (AKNISGQSPARTSSDPGTNTT). The disordered stretch occupies residues 315–337 (AKNISGQSPARTSSDPGTNTTTE). A compositionally biased stretch (polar residues) spans 373-391 (TSPQSLTTKPGPDNSTHNT). Disordered stretches follow at residues 373–392 (TSPQSLTTKPGPDNSTHNTP) and 402–479 (TQVE…SGKL). Residues 414–432 (DSTASDTPSATTAAGPPKA) are compositionally biased toward low complexity. The segment covering 433-464 (ENTNTSKSTDFLDPATTTSPQNHSETAGNNNT) has biased composition (polar residues). N-linked (GlcNAc...) asparagine; by host glycans are attached at residues N436, N454, and N462. Positions 524–539 (GAAIGLAWIPYFGPAA) are fusion peptide. Positions 554–595 (LICGLRQLANETTQALQLFLRATTELRTFSILNRKAIDFLLQ) form a coiled coil. Residue N563 is glycosylated (N-linked (GlcNAc...) asparagine; by host). Positions 615 to 634 (WTKNITDKIDQIIHDFVDKT) form a coiled coil. N-linked (GlcNAc...) asparagine; by host glycosylation is present at N618. Residues 651-671 (WIPAGIGVTGVIIAVIALFCI) form a helical membrane-spanning segment. The Important role for host BST2/tetherin antagonism signature appears at 660–664 (GVIIA). S-palmitoyl cysteine; by host attachment occurs at residues C670 and C672. The Cytoplasmic portion of the chain corresponds to 672-676 (CKFVF).

This sequence belongs to the filoviruses glycoprotein family. As to quaternary structure, homotrimer; each monomer consists of a GP1 and a GP2 subunit linked by disulfide bonds. The resulting peplomers (GP1,2) protrude from the virus surface as spikes. Interacts with host integrin alpha-V/ITGAV. Interacts with host CLEC10A. Also binds to host CD209 and CLEC4M/DC-SIGN(R). Interacts with host FOLR1. Interacts with BST2; this interaction inhibits the antiviral effect of BST2 and this allows viral release from infected cells. Interacts with host FCN1; this interaction enhances viral entry. Interacts with host TLR4; this interaction induces cell death in T-lymphocytes or proinflammatory cytokines and SOCS1 production in monocytes. Interacts with host entry receptor NPC1. In terms of assembly, GP1 and GP2delta are part of GP1,2delta soluble complexes released by ectodomain shedding. The signal peptide region modulates GP's high mannose glycosylation, thereby determining the efficiency of the interactions with DC-SIGN(R). Post-translationally, N-glycosylated. In terms of processing, glycosylated; glycosylation is essential for the activation of dendritic cells and macrophages. O-glycosylated in the mucin-like region. Post-translationally, palmitoylation is not required for its function. In terms of processing, specific enzymatic cleavages in vivo yield mature proteins. The precursor is processed into GP1 and GP2 by host cell furin in the trans Golgi, and maybe by other host proteases, to yield the mature GP1 and GP2 proteins. The cleavage site corresponds to the furin optimal cleavage sequence [KR]-X-[KR]-R. This cleavage does not seem to be required for function. After the internalization of the virus into cell endosomes, GP1 C-terminus is removed by the endosomal proteases cathepsin B, cathepsin L, or both, leaving a 19-kDa N-terminal fragment which is further digested by cathepsin B. This cleaved 19-kDa GP1 can then bind to the host entry receptor NPC1. Proteolytic processing of GP1,2 by host ADAM17 can remove the transmembrane anchor of GP2 and leads to shedding of complexes consisting in GP1 and truncated GP2 (GP1,2delta).

Its subcellular location is the virion membrane. The protein resides in the host cell membrane. It is found in the secreted. Functionally, trimeric GP1,2 complexes form the virion surface spikes and mediate the viral entry processes, with GP1 acting as the receptor-binding subunit and GP2 as the membrane fusion subunit. At later times of infection, down-regulates the expression of various host cell surface molecules that are essential for immune surveillance and cell adhesion. Down-modulates several integrins including ITGA1, ITGA2, ITGA3, ITGA4, ITGA5, ITGA6, ITGAV and ITGB1. This decrease in cell adhesion molecules may lead to cell detachment, contributing to the disruption of blood vessel integrity and hemorrhages developed during infection (cytotoxicity). Interacts with host TLR4 and thereby stimulates the differentiation and activation of monocytes leading to bystander death of T-lymphocytes. Down-regulates as well the function of host natural killer cells. Counteracts the antiviral effect of host BST2/tetherin that restricts release of progeny virions from infected cells. However, cooperates with VP40 and host BST2 to activate canonical NF-kappa-B pathway in a manner dependent on neddylation. Functions as a decoy for anti-GP1,2 antibodies thereby contributing to viral immune evasion. Interacts and activates host macrophages and dendritic cells inducing up-regulation of cytokine transcription. This effect is mediated throught activation of host TLR4. Its function is as follows. Responsible for binding to the receptor(s) on target cells. Interacts with CD209/DC-SIGN and CLEC4M/DC-SIGNR which act as cofactors for virus entry into dendritic cells (DCs) and endothelial cells. Binding to the macrophage specific lectin CLEC10A also seems to enhance virus infectivity. Interaction with FOLR1/folate receptor alpha may be a cofactor for virus entry in some cell types, although results are contradictory. Members of the Tyro3 receptor tyrosine kinase family also seem to be cell entry factors in filovirus infection. Once attached, the virions are internalized through clathrin-dependent endocytosis and/or macropinocytosis. After internalization of the virus into the endosomes of the host cell, proteolysis of GP1 by two cysteine proteases, CTSB/cathepsin B and CTSL/cathepsin L removes the glycan cap and allows GP1 binding to the host entry receptor NPC1. NPC1-binding, Ca(2+) and acidic pH induce a conformational change of GP2, which unmasks its fusion peptide and permit membranes fusion. In terms of biological role, acts as a class I viral fusion protein. Under the current model, the protein has at least 3 conformational states: pre-fusion native state, pre-hairpin intermediate state, and post-fusion hairpin state. During viral and target cell membrane fusion, the coiled coil regions (heptad repeats) assume a trimer-of-hairpins structure, positioning the fusion peptide in close proximity to the C-terminal region of the ectodomain. The formation of this structure appears to drive apposition and subsequent fusion of viral and target cell membranes. Responsible for penetration of the virus into the cell cytoplasm by mediating the fusion of the membrane of the endocytosed virus particle with the endosomal membrane. Low pH in endosomes induces an irreversible conformational change in GP2, releasing the fusion hydrophobic peptide. This Epomops franqueti (Franquet's epauletted fruit bat) protein is Envelope glycoprotein (GP).